A 319-amino-acid chain; its full sequence is ADP-ribosyl cyclase/cyclic ADP-ribose hydrolase 2 (319 aa).

An N-terminal signal peptide occupies residues 1 to 33 (MAVQACALSLRLGLWMSLLLPVLPGAGARAAGA). 3 disulfide bridges follow: Cys52/Cys68, Cys84/Cys164, and Cys145/Cys158. N-linked (GlcNAc...) asparagine glycans are attached at residues Asn67 and Asn96. Trp110 contributes to the NAD(+) binding site. Nicotinamide is bound at residue Trp110. N-linked (GlcNAc...) asparagine glycosylation occurs at Asn149. Trp173 is a binding site for NAD(+). An N-linked (GlcNAc...) asparagine glycan is attached at Asn193. Glu211 contributes to the NAD(+) binding site. Disulfide bonds link Cys239–Cys260 and Cys272–Cys281. Ser294 is lipidated: GPI-anchor amidated serine. Positions 295 to 319 (PALHAIGDISLIISLLVALASSSQA) are excised as a propeptide.

It belongs to the ADP-ribosyl cyclase family. As to quaternary structure, homodimer. As to expression, pancreatic islets, kidney, spleen, heart, thymus, intestine and salivary gland.

It is found in the cell membrane. The enzyme catalyses NAD(+) + H2O = ADP-D-ribose + nicotinamide + H(+). It catalyses the reaction NAD(+) = cyclic ADP-beta-D-ribose + nicotinamide + H(+). The catalysed reaction is cyclic ADP-beta-D-ribose + H2O = ADP-D-ribose. In terms of biological role, catalyzes both the synthesis of cyclic ADP-beta-D-ribose (cADPR) from NAD(+), and its hydrolysis to ADP-D-ribose (ADPR). Cyclic ADPR is known to serve as an endogenous second messenger that elicits calcium release from intracellular stores, and thus regulates the mobilization of intracellular calcium. May be involved in pre-B-cell growth. The protein is ADP-ribosyl cyclase/cyclic ADP-ribose hydrolase 2 (Bst1) of Rattus norvegicus (Rat).